The chain runs to 437 residues: Vasoactive intestinal polypeptide receptor 2 (437 aa).

The signal sequence occupies residues 1 to 22; sequence MRASVVLTCYCWLLVRVSSIHP. The Extracellular portion of the chain corresponds to 23 to 123; sequence ECRFHLEIQE…EDESKITFYI (101 aa). 3 disulfides stabilise this stretch: Cys-37/Cys-60, Cys-51/Cys-92, and Cys-74/Cys-108. N-linked (GlcNAc...) asparagine glycans are attached at residues Asn-57, Asn-87, and Asn-91. The helical transmembrane segment at 124–149 threads the bilayer; it reads LVKAIYTLGYSVSLMSLTTGSIIICL. The Cytoplasmic portion of the chain corresponds to 150–157; sequence FRKLHCTR. The helical transmembrane segment at 158–179 threads the bilayer; sequence NYIHLNLFLSFMLRAISVLVKD. The Extracellular segment spans residues 180 to 202; sequence SVLYSSSGTLRCHDQPGSWVGCK. Cys-201 and Cys-270 form a disulfide bridge. The helical transmembrane segment at 203–227 threads the bilayer; the sequence is LSLVFFQYCIMANFYWLLVEGLYLH. The Cytoplasmic portion of the chain corresponds to 228 to 238; it reads TLLVAILPPSR. A helical transmembrane segment spans residues 239–260; it reads CFLAYLLIGWGIPSVCIGAWIA. The Extracellular segment spans residues 261–279; the sequence is TRLSLEDTGCWDTNDHSIP. The helical transmembrane segment at 280 to 303 threads the bilayer; sequence WWVIRMPILISIVVNFALFISIVR. At 304 to 324 the chain is on the cytoplasmic side; it reads ILLQKLTSPDVGGNDQSQYKR. The helical transmembrane segment at 325–345 threads the bilayer; that stretch reads LAKSTLLLIPLFGVHYMVFAA. Topologically, residues 346 to 353 are extracellular; sequence FPIGISST. The helical transmembrane segment at 354–377 threads the bilayer; that stretch reads YQILFELCVGSFQGLVVAVLYCFL. The Cytoplasmic portion of the chain corresponds to 378-437; it reads NSEVQCELKRRWRGLCLTQPGSRDYRLHSWSMSRNGSESALQIHRGSRTQSFLQSETSVI.

It belongs to the G-protein coupled receptor 2 family. Interacts with ADCYAP1/PACAP (via N-terminal extracellular domain); activated by PACAP27 and CAPAC38 neuropeptides. Interacts with VIP; the interaction results in VIPR1 activation. As to expression, mainly in the thalamus, hippocampus and in the suprachiasmatic nucleus.

Its subcellular location is the cell membrane. Functionally, g protein-coupled receptor activated by the neuropeptides vasoactive intestinal peptide (VIP) and pituitary adenylate cyclase-activating polypeptide (ADCYAP1/PACAP). Binds VIP and both PACAP27 and PACAP38 bioactive peptides with the order of ligand affinity of VIP = PACAP38 &gt; PACAP27. Ligand binding causes a conformation change that triggers signaling via guanine nucleotide-binding proteins (G proteins) and modulates the activity of downstream effectors. Activates cAMP-dependent pathway. May be coupled to phospholipase C. The chain is Vasoactive intestinal polypeptide receptor 2 from Rattus norvegicus (Rat).